The sequence spans 709 residues: Meiotic sister-chromatid recombination protein 6, mitochondrial (709 aa).

Residues 1 to 29 constitute a mitochondrion transit peptide; sequence MLRINQRLLVRSLRDAQYQYLKSTALRFL.

It is found in the mitochondrion. Its function is as follows. May be involved in the control of meiotic sister-chromatid recombination. The polypeptide is Meiotic sister-chromatid recombination protein 6, mitochondrial (MSC6) (Candida glabrata (strain ATCC 2001 / BCRC 20586 / JCM 3761 / NBRC 0622 / NRRL Y-65 / CBS 138) (Yeast)).